A 355-amino-acid polypeptide reads, in one-letter code: Uroporphyrinogen decarboxylase (355 aa).

Substrate contacts are provided by residues 27–31 (RQAGR), aspartate 78, tyrosine 155, serine 210, and histidine 328.

It belongs to the uroporphyrinogen decarboxylase family. In terms of assembly, homodimer.

It localises to the cytoplasm. It carries out the reaction uroporphyrinogen III + 4 H(+) = coproporphyrinogen III + 4 CO2. It functions in the pathway porphyrin-containing compound metabolism; protoporphyrin-IX biosynthesis; coproporphyrinogen-III from 5-aminolevulinate: step 4/4. Functionally, catalyzes the decarboxylation of four acetate groups of uroporphyrinogen-III to yield coproporphyrinogen-III. The polypeptide is Uroporphyrinogen decarboxylase (Pseudomonas aeruginosa (strain LESB58)).